The chain runs to 562 residues: Arginine--tRNA ligase (562 aa).

A 'HIGH' region motif is present at residues 130-140 (ANPTGPLHIGH).

The protein belongs to the class-I aminoacyl-tRNA synthetase family. Monomer.

It is found in the cytoplasm. The catalysed reaction is tRNA(Arg) + L-arginine + ATP = L-arginyl-tRNA(Arg) + AMP + diphosphate. The protein is Arginine--tRNA ligase of Geobacter metallireducens (strain ATCC 53774 / DSM 7210 / GS-15).